Consider the following 660-residue polypeptide: Acetyl-coenzyme A synthetase (660 aa).

CoA contacts are provided by residues 197-200 (RGGK) and Thr-317. Residues 397 to 399 (GEP), 421 to 426 (DTFWQT), Asp-512, and Arg-528 each bind ATP. Ser-536 is a binding site for CoA. An ATP-binding site is contributed by Arg-539. Mg(2+)-binding residues include Val-550 and Val-555. An N6-acetyllysine modification is found at Lys-625.

Belongs to the ATP-dependent AMP-binding enzyme family. The cofactor is Mg(2+). Post-translationally, acetylated. Deacetylation by the SIR2-homolog deacetylase activates the enzyme.

The catalysed reaction is acetate + ATP + CoA = acetyl-CoA + AMP + diphosphate. Its function is as follows. Catalyzes the conversion of acetate into acetyl-CoA (AcCoA), an essential intermediate at the junction of anabolic and catabolic pathways. AcsA undergoes a two-step reaction. In the first half reaction, AcsA combines acetate with ATP to form acetyl-adenylate (AcAMP) intermediate. In the second half reaction, it can then transfer the acetyl group from AcAMP to the sulfhydryl group of CoA, forming the product AcCoA. The polypeptide is Acetyl-coenzyme A synthetase (Cupriavidus taiwanensis (strain DSM 17343 / BCRC 17206 / CCUG 44338 / CIP 107171 / LMG 19424 / R1) (Ralstonia taiwanensis (strain LMG 19424))).